Reading from the N-terminus, the 97-residue chain is Co-chaperonin GroES (97 aa).

Belongs to the GroES chaperonin family. In terms of assembly, heptamer of 7 subunits arranged in a ring. Interacts with the chaperonin GroEL.

The protein localises to the cytoplasm. Its function is as follows. Together with the chaperonin GroEL, plays an essential role in assisting protein folding. The GroEL-GroES system forms a nano-cage that allows encapsulation of the non-native substrate proteins and provides a physical environment optimized to promote and accelerate protein folding. GroES binds to the apical surface of the GroEL ring, thereby capping the opening of the GroEL channel. This chain is Co-chaperonin GroES, found in Pectobacterium atrosepticum (strain SCRI 1043 / ATCC BAA-672) (Erwinia carotovora subsp. atroseptica).